A 3166-amino-acid polypeptide reads, in one-letter code: Intermembrane lipid transfer protein VPS13A (3166 aa).

One can recognise a Chorein N-terminal domain in the interval 3–116; it reads FESVVVEVLN…LMETKQQELK (114 aa). TPR repeat units lie at residues 212 to 245 and 373 to 406; these read LFAYWNVNSEMFYLNDYDESLKALKNGIVNENIV and LTSKKPSPEILMSLEELEKTLDVFNITIARQQAE. Residue T831 is modified to Phosphothreonine. S835 carries the post-translational modification Phosphoserine. An FFAT motif is present at residues 838 to 844; the sequence is EFFDAPC. The segment covering 1343–1359 has biased composition (polar residues); that stretch reads APSSANKDPETMTSGVT. The interval 1343-1365 is disordered; sequence APSSANKDPETMTSGVTSPPDHS. Phosphoserine is present on S1410. TPR repeat units follow at residues 1806-1840 and 1999-2034; these read AIVESDSEAENYKVPEYKTAISFYSRDQLNITLSK and ISVFEGDTLLGIASPENEFNIPLASYRSSLSLVPED. Residues 2202–2447 enclose the SHR-BD domain; the sequence is VAFHSPYWMV…VYYTWADPVG (246 aa). 2 required for mitochondrial localization regions span residues 2607–3166 and 2743–3166; these read LQPH…SPRL and EYEV…SPRL. 2 TPR repeats span residues 2716 to 2750 and 2852 to 2890; these read ADLVTKAEVTEKTEVEHFHKDVEAFEQEYEVVSSV and ILGLDVLGNPFGLIREFSEGVEAFFYEPYQGAIQGPEEF. The tract at residues 2945 to 3019 is required for lipid droplet localization; that stretch reads PAGLREGITR…SSTFQGIKRA (75 aa).

The protein belongs to the VPS13 family. Interacts (via FFAT motif) with VAPA and VAPB. Interacts with RAB7A. Interacts with XK.

The protein resides in the mitochondrion outer membrane. Its subcellular location is the endoplasmic reticulum membrane. It is found in the endosome membrane. The protein localises to the lysosome membrane. It localises to the lipid droplet. The protein resides in the golgi apparatus. Its subcellular location is the cytoplasmic vesicle. It is found in the secretory vesicle. The protein localises to the neuronal dense core vesicle. Its function is as follows. Mediates the transfer of lipids between membranes at organelle contact sites. Required for the formation or stabilization of ER-mitochondria contact sites which enable transfer of lipids between the ER and mitochondria. Negatively regulates lipid droplet size and motility. Required for efficient lysosomal protein degradation. The sequence is that of Intermembrane lipid transfer protein VPS13A from Mus musculus (Mouse).